Consider the following 504-residue polypeptide: L-amino-acid oxidase (504 aa).

The N-terminal stretch at 1-18 is a signal peptide; it reads MNVFFMFSLLFLATLGSC. Cys28 and Cys191 are disulfide-bonded. Residues 61 to 62, 81 to 82, Arg89, and 105 to 108 each bind FAD; these read MS, EA, and GPMR. Residue Arg108 participates in substrate binding. N-linked (GlcNAc...) asparagine glycosylation is present at Asn190. His241 contributes to the substrate binding site. Position 279 (Val279) interacts with FAD. Cys349 and Cys430 are oxidised to a cystine. N-linked (GlcNAc...) asparagine glycosylation is present at Asn379. Substrate is bound at residue Tyr390. FAD contacts are provided by residues Glu475 and 482 to 487; that span reads GWIDST. 482 to 483 is a substrate binding site; it reads GW.

It belongs to the flavin monoamine oxidase family. FIG1 subfamily. Homodimer; non-covalently linked. It depends on FAD as a cofactor. As to expression, expressed by the venom gland.

The protein resides in the secreted. The catalysed reaction is an L-alpha-amino acid + O2 + H2O = a 2-oxocarboxylate + H2O2 + NH4(+). The enzyme catalyses L-leucine + O2 + H2O = 4-methyl-2-oxopentanoate + H2O2 + NH4(+). It catalyses the reaction L-phenylalanine + O2 + H2O = 3-phenylpyruvate + H2O2 + NH4(+). It carries out the reaction L-tryptophan + O2 + H2O = indole-3-pyruvate + H2O2 + NH4(+). The catalysed reaction is L-methionine + O2 + H2O = 4-methylsulfanyl-2-oxobutanoate + H2O2 + NH4(+). The enzyme catalyses L-tyrosine + O2 + H2O = 3-(4-hydroxyphenyl)pyruvate + H2O2 + NH4(+). Functionally, catalyzes an oxidative deamination of predominantly hydrophobic and aromatic L-amino acids, thus producing hydrogen peroxide that may contribute to the diverse toxic effects of this enzyme. Is highly active on L-Tyr followed by L-Phe, L-Met, L-Leu, L-Trp, and weakly active on L-Ile, L-Arg, L-Val, L-Lys, and L-Ala. Inhibits ADP- and collagen-induced platelet aggregation. This inhibition is inhibited by catalase, indicating the importance of generated H(2)O(2) for the inhibitory effect. This effect on platelets among snake L-amino-acid oxidases is however controversial, since some of them induce aggregation, whereas the other inhibit agonist-induced aggregation. In vivo, this enzyme induces a rapid, substantial and reversible increase in the paw volume of mice (edema). In addition, myofibrosis, and inflammatory cell infiltration on the paw tissue are also observed. The chain is L-amino-acid oxidase from Daboia russelii (Russel's viper).